The primary structure comprises 377 residues: Presenilin-associated rhomboid-like protein, mitochondrial (377 aa).

The transit peptide at 1-50 (MALQGWVQRGWRCGPAWAPPLGGGYRELSATQAPRLLGRRFNLFVQQKCG) directs the protein to the mitochondrion. The Mitochondrial matrix segment spans residues 51–99 (FRKAPRKVEPRRSDTGSSGEAYKRSALIPPLEETVFYPSPYPIRTLVKP). 2 positions are modified to phosphoserine: serine 63 and serine 68. The helical transmembrane segment at 100-119 (FFFTIGFTGCAFGSAAIWQY) threads the bilayer. Topologically, residues 120–165 (ESLKSRVQSYFDGIKADWLDSIRPQKEGNLRKEINKWWNSLSDGQR) are mitochondrial intermembrane. A helical membrane pass occupies residues 166 to 185 (TVTGIIAANALVFCLWRVPS). The Mitochondrial matrix portion of the chain corresponds to 186 to 205 (LQRTMIRYFTSNPASKVLCS). A helical membrane pass occupies residues 206-228 (PMLLSTFSHFSLFHMAANMYVLW). Residues 229–242 (SFSSSIVNILGQEQ) lie on the Mitochondrial intermembrane side of the membrane. The chain crosses the membrane as a helical span at residues 243–260 (FVAVYLSAGVISNFVSYV). Over 261–270 (CKVATGRYGP) the chain is Mitochondrial matrix. Residues 271-287 (SLGASGAIMTVLAAVCT) form a helical membrane-spanning segment. Serine 275 (nucleophile) is an active-site residue. The Mitochondrial intermembrane segment spans residues 288-293 (KIPEGR). Residues 294 to 316 (LAIIFLPVFTFTAGNALKAIIAM) form a helical membrane-spanning segment. The Mitochondrial matrix portion of the chain corresponds to 317–330 (DTAGMILGWKFFDH). Residues 331-352 (AAHLGGALFGIWYITYGHELIW) traverse the membrane as a helical segment. Residue histidine 333 is part of the active site. Topologically, residues 353–377 (KNREPLVKIWHEIRTNGPKKGGGSK) are mitochondrial intermembrane.

This sequence belongs to the peptidase S54 family. Interacts with PSEN1 and PSEN2. Binds OPA1. In terms of processing, P-beta is proteolytically processed (beta-cleavage) in a PARL-dependent manner.

It is found in the mitochondrion inner membrane. The protein resides in the nucleus. It catalyses the reaction Cleaves type-1 transmembrane domains using a catalytic dyad composed of serine and histidine that are contributed by different transmembrane domains.. In terms of biological role, required for the control of apoptosis during postnatal growth. Essential for proteolytic processing of an antiapoptotic form of OPA1 which prevents the release of mitochondrial cytochrome c in response to intrinsic apoptotic signals. Required for the maturation of PINK1 into its 52kDa mature form after its cleavage by mitochondrial-processing peptidase (MPP). Promotes cleavage of serine/threonine-protein phosphatase PGAM5 in damaged mitochondria in response to loss of mitochondrial membrane potential. Mediates differential cleavage of PINK1 and PGAM5 depending on the health status of mitochondria, disassociating from PINK1 and associating with PGAM5 in response to mitochondrial membrane potential loss. Required for processing of CLPB into a form with higher protein disaggregase activity by removing an autoinhibitory N-terminal peptide. Promotes processing of DIABLO/SMAC in the mitochondrion which is required for DIABLO apoptotic activity. Also required for cleavage of STARD7 and TTC19. Promotes changes in mitochondria morphology regulated by phosphorylation of P-beta domain. The protein is Presenilin-associated rhomboid-like protein, mitochondrial (Parl) of Mus musculus (Mouse).